The chain runs to 48 residues: Large ribosomal subunit protein bL33B (48 aa).

Belongs to the bacterial ribosomal protein bL33 family.

This chain is Large ribosomal subunit protein bL33B, found in Lactococcus lactis subsp. cremoris (strain MG1363).